Reading from the N-terminus, the 222-residue chain is MASGYGDASQKIDYVFKVVLIGDSAVGKSQILARFARNEFSLDSKATIGVEFQTRTLAIQHKSVKAQIWDTAGQERYRAVTSAYYRGAVGAMLVYDITKRQTFDHIPRWLEELRAHADRNIVIMLIGNKTDLEDQRAVPTEDAKEFAQKEGLFFLETSAMEATNLEDAFLTVLTEIFNIVNKKNLAADDNQSNGNPASLTGKKILVPGPGQVIPEKKACCSS.

22–29 (GDSAVGKS) lines the GTP pocket. An Effector region motif is present at residues 44–52 (SKATIGVEF). Residues 70–74 (DTAGQ) and 128–131 (NKTD) each bind GTP. 2 S-geranylgeranyl cysteine lipidation sites follow: Cys-219 and Cys-220.

This sequence belongs to the small GTPase superfamily. Rab family.

The protein resides in the cell membrane. The polypeptide is Ras-related protein Rab11D (RAB11D) (Nicotiana tabacum (Common tobacco)).